Consider the following 134-residue polypeptide: Large ribosomal subunit protein bL20 (134 aa).

It belongs to the bacterial ribosomal protein bL20 family.

Binds directly to 23S ribosomal RNA and is necessary for the in vitro assembly process of the 50S ribosomal subunit. It is not involved in the protein synthesizing functions of that subunit. This chain is Large ribosomal subunit protein bL20, found in Allorhizobium ampelinum (strain ATCC BAA-846 / DSM 112012 / S4) (Agrobacterium vitis (strain S4)).